A 743-amino-acid polypeptide reads, in one-letter code: Merozoite surface protein 9 (743 aa).

A signal peptide spans 1–23 (MMNMKIVLFSLLLFVIRWNIISC). The segment at 77-235 (KELLKEKQYT…VNDEDDVNDE (159 aa)) is interaction with MSP1 and host SLC4A1/Band 3. Disordered stretches follow at residues 202–282 (KSQG…ATAY), 459–487 (DNQAVDTKSMEEPKVKAQPALRGVEPTED), 512–540 (NNTPNVVPPTQSKKKNKNETVSGMDENFD), and 666–743 (VDAL…EESK). The segment covering 211 to 224 (SQNQNENNDNQKYQ) has biased composition (polar residues). Tandem repeats lie at residues 226–231 (VNDEDD), 232–237 (VNDEED), 238–243 (TNDDED), 244–249 (TNDEED), 250–255 (TNDDED), 256–261 (TNDDED), 262–267 (TNDEED), and 268–273 (TNDEED). Residues 226–273 (VNDEDDVNDEEDTNDDEDTNDEEDTNDDEDTNDDEDTNDEEDTNDEED) are 8 X 6 AA tandem repeats of [VT]-N-D-[ED]-[ED]-D. Residues 226–274 (VNDEDDVNDEEDTNDDEDTNDEEDTNDDEDTNDDEDTNDEEDTNDEEDH) are compositionally biased toward acidic residues. Residues 364–528 (LKDNLINYEF…PPTQSKKKNK (165 aa)) form an interaction with MSP1 and host SLC4A1/Band 3 region. Residues 459–473 (DNQAVDTKSMEEPKV) are compositionally biased toward basic and acidic residues. The span at 512 to 521 (NNTPNVVPPT) shows a compositional bias: low complexity. Positions 644–733 (NQETEEEMEK…QEEEEEEEIV (90 aa)) form a coiled coil. Positions 672–721 (KNKEEEEKEKEKEEKEKEEKEKEKEEKEKEEKEKEEKEKEEKEEEKKEKE) are enriched in basic and acidic residues. The span at 722–733 (EEQEEEEEEEIV) shows a compositional bias: acidic residues.

It belongs to the plasmodium ABRA family. As to quaternary structure, forms a complex composed of MSP1, MSP6, MSP7, MSP9 and MSP3; within the complex, MSP6 and MSP9 mediate the binding to the host erythrocyte. Interacts with MSP1 subunits p19 and p42; the interaction is direct. Interacts with host SLC4A1/Band 3 protein (via the 5ABC region). MSP1 subunits p19 or p42, and MSP9 form a co-ligand complex that interacts with host SLC4A1/Band 3 protein. Not glycosylated.

Its subcellular location is the cell membrane. It is found in the parasitophorous vacuole lumen. It localises to the secreted. In terms of biological role, during the asexual blood stage, involved in the sialic acid-independent (SAID) merozoite invasion of host erythrocytes by binding to host SLC4A1/Band 3 protein on the surface of the host erythrocyte. The chain is Merozoite surface protein 9 from Plasmodium falciparum (isolate 3D7).